We begin with the raw amino-acid sequence, 253 residues long: Triosephosphate isomerase (253 aa).

Substrate is bound at residue 9 to 11; it reads NWK. The Electrophile role is filled by His-96. Glu-169 (proton acceptor) is an active-site residue. Substrate-binding positions include Gly-175, Ser-215, and 236-237; that span reads GG.

It belongs to the triosephosphate isomerase family. In terms of assembly, homodimer.

Its subcellular location is the cytoplasm. It carries out the reaction D-glyceraldehyde 3-phosphate = dihydroxyacetone phosphate. It participates in carbohydrate biosynthesis; gluconeogenesis. Its pathway is carbohydrate degradation; glycolysis; D-glyceraldehyde 3-phosphate from glycerone phosphate: step 1/1. Functionally, involved in the gluconeogenesis. Catalyzes stereospecifically the conversion of dihydroxyacetone phosphate (DHAP) to D-glyceraldehyde-3-phosphate (G3P). This chain is Triosephosphate isomerase, found in Borrelia garinii subsp. bavariensis (strain ATCC BAA-2496 / DSM 23469 / PBi) (Borreliella bavariensis).